Reading from the N-terminus, the 420-residue chain is UDP-N-acetyl-D-mannosamine dehydrogenase (420 aa).

Residues Tyr-13, Ile-14, Asp-33, Thr-85, and Thr-126 each coordinate NAD(+). Residues Arg-160, Val-161, Lys-212, Asn-216, Arg-219, His-250, Arg-252, and Gly-263 each coordinate UDP-N-acetyl-alpha-D-mannosaminouronate. Lys-212 (proton donor/acceptor) is an active-site residue. Cys-266 (nucleophile) is an active-site residue. Residues Phe-330 and Lys-331 each coordinate UDP-N-acetyl-alpha-D-mannosaminouronate. Arg-338 lines the NAD(+) pocket. Lys-416 provides a ligand contact to UDP-N-acetyl-alpha-D-mannosaminouronate.

The protein belongs to the UDP-glucose/GDP-mannose dehydrogenase family. WecC subfamily. Homodimer.

It catalyses the reaction UDP-N-acetyl-alpha-D-mannosamine + 2 NAD(+) + H2O = UDP-N-acetyl-alpha-D-mannosaminouronate + 2 NADH + 3 H(+). It participates in bacterial outer membrane biogenesis; enterobacterial common antigen biosynthesis. Its function is as follows. Catalyzes the four-electron oxidation of UDP-N-acetyl-D-mannosamine (UDP-ManNAc), reducing NAD(+) and releasing UDP-N-acetylmannosaminuronic acid (UDP-ManNAcA). The polypeptide is UDP-N-acetyl-D-mannosamine dehydrogenase (Shigella flexneri).